Here is a 141-residue protein sequence, read N- to C-terminus: Hemoglobin subunit alpha-1 (141 aa).

A Globin domain is found at 1 to 141 (VLTDAEKKEV…VATVLTSKYR (141 aa)). His-58 contributes to the O2 binding site. Residue His-87 participates in heme b binding.

This sequence belongs to the globin family. Heterotetramer of two alpha chains and two beta chains. As to expression, red blood cells.

In terms of biological role, involved in oxygen transport from the lung to the various peripheral tissues. The polypeptide is Hemoglobin subunit alpha-1 (Tachyglossus aculeatus aculeatus (Southeast Australian short-beaked echidna)).